The chain runs to 132 residues: Small ribosomal subunit protein uS12 (132 aa).

Asp89 carries the post-translational modification 3-methylthioaspartic acid. Positions 101-132 (TLDASGAAGPSSTNKATRNRKRSKYGVKRPKA) are disordered. The segment covering 117–132 (TRNRKRSKYGVKRPKA) has biased composition (basic residues).

This sequence belongs to the universal ribosomal protein uS12 family. In terms of assembly, part of the 30S ribosomal subunit. Contacts proteins S8 and S17. May interact with IF1 in the 30S initiation complex.

In terms of biological role, with S4 and S5 plays an important role in translational accuracy. Functionally, interacts with and stabilizes bases of the 16S rRNA that are involved in tRNA selection in the A site and with the mRNA backbone. Located at the interface of the 30S and 50S subunits, it traverses the body of the 30S subunit contacting proteins on the other side and probably holding the rRNA structure together. The combined cluster of proteins S8, S12 and S17 appears to hold together the shoulder and platform of the 30S subunit. This chain is Small ribosomal subunit protein uS12, found in Sorangium cellulosum (strain So ce56) (Polyangium cellulosum (strain So ce56)).